The sequence spans 297 residues: Homoserine kinase (297 aa).

ATP is bound at residue 79-89; sequence PIARGLGSSGA.

This sequence belongs to the GHMP kinase family. Homoserine kinase subfamily.

It is found in the cytoplasm. It carries out the reaction L-homoserine + ATP = O-phospho-L-homoserine + ADP + H(+). It functions in the pathway amino-acid biosynthesis; L-threonine biosynthesis; L-threonine from L-aspartate: step 4/5. Catalyzes the ATP-dependent phosphorylation of L-homoserine to L-homoserine phosphate. This Pyrobaculum aerophilum (strain ATCC 51768 / DSM 7523 / JCM 9630 / CIP 104966 / NBRC 100827 / IM2) protein is Homoserine kinase.